A 209-amino-acid polypeptide reads, in one-letter code: Thymidylate kinase (209 aa).

Residue 10-17 (GLDGAGKS) participates in ATP binding.

Belongs to the thymidylate kinase family.

The catalysed reaction is dTMP + ATP = dTDP + ADP. Its function is as follows. Phosphorylation of dTMP to form dTDP in both de novo and salvage pathways of dTTP synthesis. This Francisella tularensis subsp. novicida (strain U112) protein is Thymidylate kinase.